A 351-amino-acid polypeptide reads, in one-letter code: Fe(3+) ions import ATP-binding protein FbpC (351 aa).

Residues 7-241 enclose the ABC transporter domain; sequence LTVKNLNKFF…PNHLETAKFM (235 aa). 39-46 is a binding site for ATP; it reads GASGCGKT.

It belongs to the ABC transporter superfamily. Fe(3+) ion importer (TC 3.A.1.10) family. As to quaternary structure, the complex is composed of two ATP-binding proteins (FbpC), two transmembrane proteins (FbpB) and a solute-binding protein (FbpA).

The protein resides in the cell inner membrane. The enzyme catalyses Fe(3+)(out) + ATP + H2O = Fe(3+)(in) + ADP + phosphate + H(+). In terms of biological role, part of the ABC transporter complex FbpABC involved in Fe(3+) ions import. Responsible for energy coupling to the transport system. The chain is Fe(3+) ions import ATP-binding protein FbpC from Haemophilus influenzae (strain 86-028NP).